The primary structure comprises 438 residues: V-type ATP synthase beta chain (438 aa).

It belongs to the ATPase alpha/beta chains family.

Functionally, produces ATP from ADP in the presence of a proton gradient across the membrane. The V-type beta chain is a regulatory subunit. The polypeptide is V-type ATP synthase beta chain (atpB) (Chlamydia trachomatis serovar D (strain ATCC VR-885 / DSM 19411 / UW-3/Cx)).